Consider the following 463-residue polypeptide: Lactadherin (463 aa).

The first 22 residues, 1–22 (MQVSRVLAALCGMLLCASGLFA), serve as a signal peptide directing secretion. 2 consecutive EGF-like domains span residues 24 to 61 (SGDF…LVCN) and 64 to 108 (ERGP…IHCE). Cystine bridges form between Cys28–Cys39, Cys33–Cys49, and Cys51–Cys60. An N-linked (GlcNAc...) asparagine glycan is attached at Asn61. 6 disulfides stabilise this stretch: Cys68–Cys79, Cys73–Cys96, Cys98–Cys107, Cys148–Cys303, Cys290–Cys294, and Cys308–Cys463. A Cell attachment site motif is present at residues 87–89 (RGD). F5/8 type C domains lie at 148 to 303 (CSTQ…LLGC) and 308 to 463 (CSEP…LLGC). A glycan (N-linked (GlcNAc...) asparagine) is linked at Asn266. N-linked (GlcNAc...) asparagine glycosylation is found at Asn316 and Asn426.

In terms of processing, N-glycosylated. Isoform 1 also exists in both an O-glycosylated and a non-O-glycosylated form. In terms of tissue distribution, mammary epithelial cell surfaces and spermatozoan. Isoform 2 is present in brain, heart, kidney and spleen and at low levels in lung, liver, small intestine and testis.

The protein resides in the membrane. It localises to the secreted. Its subcellular location is the cytoplasmic vesicle. It is found in the secretory vesicle. The protein localises to the acrosome membrane. Functionally, contributes to phagocytic removal of apoptotic cells in many tissues. Specific ligand for the alpha-v/beta-3 and alpha-v/beta-5 receptors. Also binds to phosphatidylserine-enriched cell surfaces in a receptor-independent manner. Zona pellucida-binding protein which may play a role in gamete interaction. Plays an important role in the maintenance of intestinal epithelial homeostasis and the promotion of mucosal healing. Promotes VEGF-dependent neovascularization. The protein is Lactadherin (Mfge8) of Mus musculus (Mouse).